Reading from the N-terminus, the 260-residue chain is CD40 ligand (260 aa).

The Cytoplasmic portion of the chain corresponds to M1–K22. The helical; Signal-anchor for type II membrane protein transmembrane segment at I23 to L46 threads the bilayer. At H47–L260 the chain is on the extracellular side. Positions V121–L260 constitute a THD domain. Residues C177 and C217 are joined by a disulfide bond. A glycan (N-linked (GlcNAc...) asparagine) is linked at N239.

Belongs to the tumor necrosis factor family. Homotrimer. Interacts with CD28. CD40 ligand, soluble form: Exists as either a monomer or a homotrimer. Forms a ternary complex between CD40 and integrins for CD40-CD40LG signaling. The soluble form derives from the membrane form by proteolytic processing.

The protein localises to the cell membrane. It is found in the cell surface. The protein resides in the secreted. Its function is as follows. Cytokine that acts as a ligand to CD40/TNFRSF5. Costimulates T-cell proliferation and cytokine production. Its cross-linking on T-cells generates a costimulatory signal which enhances the production of IL4 and IL10 in conjunction with the TCR/CD3 ligation and CD28 costimulation. Induces the activation of NF-kappa-B. Induces the activation of kinases MAPK8 and PAK2 in T-cells. Mediates B-cell proliferation in the absence of co-stimulus as well as IgE production in the presence of IL4. Involved in immunoglobulin class switching. Functionally, acts as a ligand for integrins, specifically ITGA5:ITGB1 and ITGAV:ITGB3; both integrins and the CD40 receptor are required for activation of CD40-CD40LG signaling, which have cell-type dependent effects, such as B-cell activation, NF-kappa-B signaling and anti-apoptotic signaling. This Felis catus (Cat) protein is CD40 ligand (CD40LG).